Consider the following 567-residue polypeptide: Protein NRT1/ PTR FAMILY 4.5 (567 aa).

12 consecutive transmembrane segments (helical) span residues 30–50 (GMLA…AFLA), 70–92 (SSSE…GFLA), 99–118 (FVIF…LLTI), 147–167 (AFLF…KGSL), 189–209 (FFNY…TFVV), 219–239 (WGFG…LLGS), 326–346 (IVLK…CLAQ), 374–394 (VFPV…IIPF), 411–431 (IGVG…VELK), 448–468 (LPIT…ADLF), 491–511 (SLSW…VPIV), and 535–555 (LFYW…LFWA).

This sequence belongs to the major facilitator superfamily. Proton-dependent oligopeptide transporter (POT/PTR) (TC 2.A.17) family. In terms of tissue distribution, expressed in flowers and siliques.

The protein resides in the membrane. Involved in abscisic acid transport. The polypeptide is Protein NRT1/ PTR FAMILY 4.5 (NPF4.5) (Arabidopsis thaliana (Mouse-ear cress)).